The following is a 218-amino-acid chain: Peptide methionine sulfoxide reductase MsrA (218 aa).

Residue Cys57 is part of the active site.

Belongs to the MsrA Met sulfoxide reductase family.

The enzyme catalyses L-methionyl-[protein] + [thioredoxin]-disulfide + H2O = L-methionyl-(S)-S-oxide-[protein] + [thioredoxin]-dithiol. It catalyses the reaction [thioredoxin]-disulfide + L-methionine + H2O = L-methionine (S)-S-oxide + [thioredoxin]-dithiol. Its function is as follows. Has an important function as a repair enzyme for proteins that have been inactivated by oxidation. Catalyzes the reversible oxidation-reduction of methionine sulfoxide in proteins to methionine. The protein is Peptide methionine sulfoxide reductase MsrA of Brucella melitensis biotype 1 (strain ATCC 23456 / CCUG 17765 / NCTC 10094 / 16M).